Here is a 157-residue protein sequence, read N- to C-terminus: MPRPTKFRRVEFFPENNYFVPWGKPKCEIHEVVLKVEELEAMRLKDIEELNQEQCAEKMEISRQTFQNIIDSARKKVAIALTKGKAIKISGGHYTTKLCKLKCIDCGEIYEINYEQDRHLCPNCGSEKVICNKKADFCRRWCKGQNRKEQYEESKNK.

The protein belongs to the UPF0251 family.

This is UPF0251 protein CLJ_B1488 from Clostridium botulinum (strain 657 / Type Ba4).